We begin with the raw amino-acid sequence, 151 residues long: MFGMSLPEIIIIAVIAVIFLGPDKLPDAMVKIAKFFKLFKQTVNSAKSTFEQEVKIAELKEDAKKYKENITNAASSVRKKLTFEELDELKSTVSGTKNSINESLADIKKEITKDPLTLLNNDPLNNETLNEQPSKPSPNLNLENKEIKKEA.

Residues 1-21 (MFGMSLPEIIIIAVIAVIFLG) traverse the membrane as a helical segment. Low complexity predominate over residues 120–131 (NNDPLNNETLNE). Residues 120 to 151 (NNDPLNNETLNEQPSKPSPNLNLENKEIKKEA) are disordered. Residues 132-142 (QPSKPSPNLNL) show a composition bias toward polar residues.

This sequence belongs to the TatB family. The Tat system comprises two distinct complexes: a TatABC complex, containing multiple copies of TatA, TatB and TatC subunits, and a separate TatA complex, containing only TatA subunits. Substrates initially bind to the TatABC complex, which probably triggers association of the separate TatA complex to form the active translocon.

It localises to the cell inner membrane. Its function is as follows. Part of the twin-arginine translocation (Tat) system that transports large folded proteins containing a characteristic twin-arginine motif in their signal peptide across membranes. Together with TatC, TatB is part of a receptor directly interacting with Tat signal peptides. TatB may form an oligomeric binding site that transiently accommodates folded Tat precursor proteins before their translocation. This is Sec-independent protein translocase protein TatB from Campylobacter fetus subsp. fetus (strain 82-40).